Reading from the N-terminus, the 413-residue chain is Palmitoyltransferase ZDHHC6 (413 aa).

At 1 to 24 (MGTFCSVIKFENLQELKRLCHWGP) the chain is on the cytoplasmic side. A helical transmembrane segment spans residues 25–45 (IIALGVIAICSTMAMIDSVLW). Residues 46–57 (YWPLHTTGGSVN) are Lumenal-facing. Residues 58-78 (FIMLINWTVMILYNYFNAMFV) form a helical membrane-spanning segment. Residues 79 to 143 (GPGFVPLGWK…NCCGYQNHAS (65 aa)) are Cytoplasmic-facing. Residues 99–149 (QYCKVCQAYKAPRSHHCRKCNRCVMKMDHHCPWINNCCGYQNHASFTLFLL) enclose the DHHC domain. The S-palmitoyl cysteine intermediate role is filled by cysteine 129. The helical transmembrane segment at 144 to 164 (FTLFLLLAPLGCIHAAFIFVM) threads the bilayer. Topologically, residues 165–205 (TMYTQLYHRLSFGWNTVKIDMSAARRDPLPIVPFGLAAFAT) are lumenal. Residues 206–226 (TLFALGLALGTTIAVGMLFFI) traverse the membrane as a helical segment. The Cytoplasmic portion of the chain corresponds to 227-413 (QMKIILRNKT…QAPEGEKKNR (187 aa)). The SH3 domain maps to 313–398 (VRSVRYKVIE…PRKCVEKCPC (86 aa)). S-palmitoyl cysteine attachment occurs at residues cysteine 328, cysteine 329, and cysteine 343. A Di-lysine motif motif is present at residues 410–413 (KKNR).

It belongs to the DHHC palmitoyltransferase family. In terms of assembly, homooligomerizes. Interacts with SELENOK. Post-translationally, palmitoylated at 3 different sites by ZDHHC16. The combination of the different palmitoylation events strongly affects the quaternary assembly of ZDHHC6, its localization, stability and function. Palmitoylation at Cys-328 accelerates the turnover of ZDHHC6. Depalmitoylated by LYPLA2.

It is found in the endoplasmic reticulum membrane. It carries out the reaction L-cysteinyl-[protein] + hexadecanoyl-CoA = S-hexadecanoyl-L-cysteinyl-[protein] + CoA. The enzyme catalyses L-cysteinyl-[protein] + octadecanoyl-CoA = S-octadecanoyl-L-cysteinyl-[protein] + CoA. Functionally, endoplasmic reticulum palmitoyl acyltransferase that mediates palmitoylation of proteins such as AMFR, CALX, ITPR1 and TFRC. Palmitoylates calnexin (CALX), which is required for its association with the ribosome-translocon complex and efficient folding of glycosylated proteins. Mediates palmitoylation of AMFR, promoting AMFR distribution to the peripheral endoplasmic reticulum. Together with SELENOK, palmitoylates ITPR1 in immune cells, leading to regulate ITPR1 stability and function. Stearoyltransferase that mediates stearoylation of TFRC to inhibit TFRC-mediated activation of the JNK pathway and mitochondrial fragmentation. The sequence is that of Palmitoyltransferase ZDHHC6 from Homo sapiens (Human).